Reading from the N-terminus, the 20-residue chain is Non-specific lipid-transfer protein-like protein (20 aa).

It belongs to the plant LTP family.

This Jatropha curcas (Barbados nut) protein is Non-specific lipid-transfer protein-like protein.